A 271-amino-acid polypeptide reads, in one-letter code: Ribosomal RNA small subunit methyltransferase A (271 aa).

Residues His11, Leu13, Gly38, Glu59, Asp84, and Asn109 each contribute to the S-adenosyl-L-methionine site.

Belongs to the class I-like SAM-binding methyltransferase superfamily. rRNA adenine N(6)-methyltransferase family. RsmA subfamily.

Its subcellular location is the cytoplasm. It carries out the reaction adenosine(1518)/adenosine(1519) in 16S rRNA + 4 S-adenosyl-L-methionine = N(6)-dimethyladenosine(1518)/N(6)-dimethyladenosine(1519) in 16S rRNA + 4 S-adenosyl-L-homocysteine + 4 H(+). Functionally, specifically dimethylates two adjacent adenosines (A1518 and A1519) in the loop of a conserved hairpin near the 3'-end of 16S rRNA in the 30S particle. May play a critical role in biogenesis of 30S subunits. This is Ribosomal RNA small subunit methyltransferase A from Trichormus variabilis (strain ATCC 29413 / PCC 7937) (Anabaena variabilis).